Here is a 151-residue protein sequence, read N- to C-terminus: MGTNYYLYFITKDKYRSRELLECHVGYNNILDGINFLGFLVTFMDDLIVYWKFKNLDHKNPDRFREIILVSNTLTLLCRQLINGETVTSIANLYDILKISVQYLGDEYVFKDEYDKIISTSEVIDIFYCENLHTENFLRDSISGFYISTDF.

This is an uncharacterized protein from Acanthamoeba polyphaga mimivirus (APMV).